The chain runs to 248 residues: Large ribosomal subunit protein uL4 (248 aa).

Disordered regions lie at residues 48–95 (GTHK…GPVP) and 210–248 (AFSEDRDNPGTSLPKSPTPEDSSDATKARSSRHDDRTGA). The segment covering 233–248 (DATKARSSRHDDRTGA) has biased composition (basic and acidic residues).

It belongs to the universal ribosomal protein uL4 family. In terms of assembly, part of the 50S ribosomal subunit.

Functionally, one of the primary rRNA binding proteins, this protein initially binds near the 5'-end of the 23S rRNA. It is important during the early stages of 50S assembly. It makes multiple contacts with different domains of the 23S rRNA in the assembled 50S subunit and ribosome. In terms of biological role, forms part of the polypeptide exit tunnel. The polypeptide is Large ribosomal subunit protein uL4 (Tropheryma whipplei (strain TW08/27) (Whipple's bacillus)).